An 86-amino-acid chain; its full sequence is YcgL domain-containing protein XCC3997 (86 aa).

The 83-residue stretch at 1–83 (MHAYVYKSQR…PKTVVLAGEC (83 aa)) folds into the YcgL domain.

This is YcgL domain-containing protein XCC3997 from Xanthomonas campestris pv. campestris (strain ATCC 33913 / DSM 3586 / NCPPB 528 / LMG 568 / P 25).